We begin with the raw amino-acid sequence, 286 residues long: Large ribosomal subunit protein uL3 (286 aa).

Residue glutamine 152 is modified to N5-methylglutamine. Residues 246–265 show a composition bias toward low complexity; that stretch reads EAAAAAAAAEEQAAMEAAEA. The segment at 246-286 is disordered; the sequence is EAAAAAAAAEEQAAMEAAEAAEAKTDTVAEAEAAEKKEGDA. The segment covering 266–286 has biased composition (basic and acidic residues); sequence AEAKTDTVAEAEAAEKKEGDA.

This sequence belongs to the universal ribosomal protein uL3 family. As to quaternary structure, part of the 50S ribosomal subunit. Forms a cluster with proteins L14 and L19. Methylated by PrmB.

In terms of biological role, one of the primary rRNA binding proteins, it binds directly near the 3'-end of the 23S rRNA, where it nucleates assembly of the 50S subunit. This Roseobacter denitrificans (strain ATCC 33942 / OCh 114) (Erythrobacter sp. (strain OCh 114)) protein is Large ribosomal subunit protein uL3.